The primary structure comprises 153 residues: Protein ElaA (153 aa).

The N-acetyltransferase domain occupies Leu7–Ile151.

This sequence belongs to the UPF0039 (ElaA) family.

This chain is Protein ElaA (elaA), found in Escherichia coli (strain K12).